The following is a 212-amino-acid chain: Holliday junction branch migration complex subunit RuvA (212 aa).

Residues 1-70 (MISYLKGSPI…EDQQILYGFS (70 aa)) are domain I. The segment at 71–149 (TTAERELFRQ…QWRKMVGVTV (79 aa)) is domain II. The flexible linker stretch occupies residues 150–160 (TSSAAMPSLEI). Residues 160–212 (ILEDIEMTLLALGYTNEEINKAISTLSQDNLMLKNTNTEEWIKEAIAWLSQGT) are domain III.

The protein belongs to the RuvA family. As to quaternary structure, homotetramer. Forms an RuvA(8)-RuvB(12)-Holliday junction (HJ) complex. HJ DNA is sandwiched between 2 RuvA tetramers; dsDNA enters through RuvA and exits via RuvB. An RuvB hexamer assembles on each DNA strand where it exits the tetramer. Each RuvB hexamer is contacted by two RuvA subunits (via domain III) on 2 adjacent RuvB subunits; this complex drives branch migration. In the full resolvosome a probable DNA-RuvA(4)-RuvB(12)-RuvC(2) complex forms which resolves the HJ.

It localises to the cytoplasm. Its function is as follows. The RuvA-RuvB-RuvC complex processes Holliday junction (HJ) DNA during genetic recombination and DNA repair, while the RuvA-RuvB complex plays an important role in the rescue of blocked DNA replication forks via replication fork reversal (RFR). RuvA specifically binds to HJ cruciform DNA, conferring on it an open structure. The RuvB hexamer acts as an ATP-dependent pump, pulling dsDNA into and through the RuvAB complex. HJ branch migration allows RuvC to scan DNA until it finds its consensus sequence, where it cleaves and resolves the cruciform DNA. The polypeptide is Holliday junction branch migration complex subunit RuvA (Crocosphaera subtropica (strain ATCC 51142 / BH68) (Cyanothece sp. (strain ATCC 51142))).